A 705-amino-acid chain; its full sequence is Elongation factor G (705 aa).

Positions 8–290 constitute a tr-type G domain; it reads ERYRNFGIMA…GVVHLLPSPA (283 aa). Residues 17–24, 88–92, and 142–145 each bind GTP; these read AHIDAGKT, DTPGH, and NKMD. The disordered stretch occupies residues 290 to 309; the sequence is ADRPPVQGIDEDEKEDTRAA.

It belongs to the TRAFAC class translation factor GTPase superfamily. Classic translation factor GTPase family. EF-G/EF-2 subfamily.

It is found in the cytoplasm. In terms of biological role, catalyzes the GTP-dependent ribosomal translocation step during translation elongation. During this step, the ribosome changes from the pre-translocational (PRE) to the post-translocational (POST) state as the newly formed A-site-bound peptidyl-tRNA and P-site-bound deacylated tRNA move to the P and E sites, respectively. Catalyzes the coordinated movement of the two tRNA molecules, the mRNA and conformational changes in the ribosome. The chain is Elongation factor G from Xanthomonas axonopodis pv. citri (strain 306).